We begin with the raw amino-acid sequence, 304 residues long: Non-specific ribonucleoside hydrolase RihC (304 aa).

Residue histidine 233 is part of the active site.

It belongs to the IUNH family. RihC subfamily.

Its function is as follows. Hydrolyzes both purine and pyrimidine ribonucleosides with a broad-substrate specificity. The polypeptide is Non-specific ribonucleoside hydrolase RihC (Klebsiella pneumoniae (strain 342)).